We begin with the raw amino-acid sequence, 503 residues long: Annexin A11 (503 aa).

3 stretches are compositionally biased toward pro residues: residues 1 to 17, 80 to 145, and 155 to 169; these read MSYP…PPAP, GYPP…PYPG, and SPVP…PSYP. 2 disordered regions span residues 1–35 and 56–178; these read MSYP…MPPI and AANM…GTVT. 4 Annexin repeats span residues 198-269, 270-341, 353-425, and 429-500; these read FDPL…ALMK, TPIL…SLSQ, SLVQ…AVVK, and NTPA…KICG. An N6-acetyllysine mark is found at Lys246 and Lys253. At Lys477 the chain carries N6-acetyllysine.

It belongs to the annexin family. In terms of assembly, interacts with PDCD6 in a calcium-dependent manner. Interacts with KIF23 during cytokinesis. Interacts with S100A6.

It localises to the cytoplasm. The protein localises to the melanosome. It is found in the nucleus envelope. Its subcellular location is the nucleus. The protein resides in the nucleoplasm. It localises to the cytoskeleton. The protein localises to the spindle. Required for midbody formation and completion of the terminal phase of cytokinesis. Binds specifically to calcyclin in a calcium-dependent manner. This Oryctolagus cuniculus (Rabbit) protein is Annexin A11 (ANXA11).